A 61-amino-acid polypeptide reads, in one-letter code: Small ribosomal subunit protein uS14 (61 aa).

4 residues coordinate Zn(2+): C24, C27, C40, and C43.

Belongs to the universal ribosomal protein uS14 family. Zinc-binding uS14 subfamily. As to quaternary structure, part of the 30S ribosomal subunit. Contacts proteins S3 and S10. Zn(2+) serves as cofactor.

In terms of biological role, binds 16S rRNA, required for the assembly of 30S particles and may also be responsible for determining the conformation of the 16S rRNA at the A site. The chain is Small ribosomal subunit protein uS14 from Bifidobacterium adolescentis (strain ATCC 15703 / DSM 20083 / NCTC 11814 / E194a).